We begin with the raw amino-acid sequence, 173 residues long: Inorganic pyrophosphatase (173 aa).

Substrate-binding residues include Lys29, Arg43, and Tyr55. Positions 65, 70, and 102 each coordinate Mg(2+). Tyr141 contributes to the substrate binding site.

This sequence belongs to the PPase family. Homohexamer. The cofactor is Mg(2+).

It is found in the cytoplasm. It carries out the reaction diphosphate + H2O = 2 phosphate + H(+). In terms of biological role, catalyzes the hydrolysis of inorganic pyrophosphate (PPi) forming two phosphate ions. The chain is Inorganic pyrophosphatase from Gluconobacter oxydans (strain 621H) (Gluconobacter suboxydans).